We begin with the raw amino-acid sequence, 1696 residues long: E3 ubiquitin-protein ligase listerin (1696 aa).

HEAT repeat units follow at residues 17–55 (RGVL…KVKK), 102–140 (FCKE…KYFR), 144–181 (CSLL…WKYS), 209–250 (AEAS…CWEH), 252–289 (NAQK…RVPT), 354–394 (LISD…KAES), 431–468 (EKNL…GEGD), 542–580 (FPSI…PAVQ), 596–634 (EESD…KWSV), 921–958 (LCTA…AEML), 992–1029 (MDLS…KRGA), 1108–1148 (DLCQ…LIGL), 1150–1188 (VEMI…WLES), 1245–1282 (GIYS…TLGY), 1307–1344 (DSLQ…DLPG), 1371–1405 (VLAI…CFVL), and 1406–1442 (GYLL…LNKL). The RING-type zinc finger occupies 1645-1692 (CMICFSVIHGSNYSLPKKACRTCKKKFHSECLYKWFTSSNKSTCPLCR).

Belongs to the LTN1 family. In terms of assembly, component of the ribosome quality control complex (RQC), composed of at least the E3 ubiquitin ligase LTN1 and NEMF associated with the 60S ribosomal subunit. The complex probably also contains TCF25 as well as VCP/p97 and its ubiquitin-binding cofactors.

Its subcellular location is the cytoplasm. It localises to the cytosol. It carries out the reaction S-ubiquitinyl-[E2 ubiquitin-conjugating enzyme]-L-cysteine + [acceptor protein]-L-lysine = [E2 ubiquitin-conjugating enzyme]-L-cysteine + N(6)-ubiquitinyl-[acceptor protein]-L-lysine.. It functions in the pathway protein modification; protein ubiquitination. Functionally, E3 ubiquitin-protein ligase component of the ribosome quality control complex (RQC), a ribosome-associated complex that mediates ubiquitination and extraction of incompletely synthesized nascent chains for proteasomal degradation. Within the RQC complex, LTN1 is recruited to stalled 60S ribosomal subunits by NEMF and mediates ubiquitination of stalled nascent chains. Ubiquitination leads to VCP/p97 recruitment for extraction and degradation of the incomplete translation product. The sequence is that of E3 ubiquitin-protein ligase listerin (ltn1) from Xenopus tropicalis (Western clawed frog).